Reading from the N-terminus, the 233-residue chain is Membrane glycoprotein UL9 (233 aa).

The N-terminal stretch at 1–20 is a signal peptide; that stretch reads MSKRLQVFPWITILFYTSKS. N40, N94, N101, N131, and N169 each carry an N-linked (GlcNAc...) asparagine; by host glycan. A helical transmembrane segment spans residues 194-214; that stretch reads MWIIPLVIVITIIVLICFKFP.

This sequence belongs to the HHV-5 UL9 family.

It is found in the host membrane. In Homo sapiens (Human), this protein is Membrane glycoprotein UL9 (UL9).